The sequence spans 184 residues: ATP synthase subunit b 1 (184 aa).

The chain crosses the membrane as a helical span at residues 36-55 (NILNLAILVGVLVFYGRKVV).

Belongs to the ATPase B chain family. In terms of assembly, F-type ATPases have 2 components, F(1) - the catalytic core - and F(0) - the membrane proton channel. F(1) has five subunits: alpha(3), beta(3), gamma(1), delta(1), epsilon(1). F(0) has four main subunits: a(1), b(1), b'(1) and c(10-14). The alpha and beta chains form an alternating ring which encloses part of the gamma chain. F(1) is attached to F(0) by a central stalk formed by the gamma and epsilon chains, while a peripheral stalk is formed by the delta, b and b' chains.

Its subcellular location is the cellular thylakoid membrane. F(1)F(0) ATP synthase produces ATP from ADP in the presence of a proton or sodium gradient. F-type ATPases consist of two structural domains, F(1) containing the extramembraneous catalytic core and F(0) containing the membrane proton channel, linked together by a central stalk and a peripheral stalk. During catalysis, ATP synthesis in the catalytic domain of F(1) is coupled via a rotary mechanism of the central stalk subunits to proton translocation. Its function is as follows. Component of the F(0) channel, it forms part of the peripheral stalk, linking F(1) to F(0). The chain is ATP synthase subunit b 1 from Crocosphaera subtropica (strain ATCC 51142 / BH68) (Cyanothece sp. (strain ATCC 51142)).